We begin with the raw amino-acid sequence, 267 residues long: Large ribosomal subunit protein bL9m (267 aa).

Residues 1-52 (MAAPVVTAPGRALLRAGAGRLLRGGVQELLRPRHEGNAPDLACNFSLSQNRG) constitute a mitochondrion transit peptide.

The protein belongs to the bacterial ribosomal protein bL9 family. In terms of assembly, component of the mitochondrial large ribosomal subunit (mt-LSU). Mature mammalian 55S mitochondrial ribosomes consist of a small (28S) and a large (39S) subunit. The 28S small subunit contains a 12S ribosomal RNA (12S mt-rRNA) and 30 different proteins. The 39S large subunit contains a 16S rRNA (16S mt-rRNA), a copy of mitochondrial valine transfer RNA (mt-tRNA(Val)), which plays an integral structural role, and 52 different proteins.

Its subcellular location is the mitochondrion. This chain is Large ribosomal subunit protein bL9m (MRPL9), found in Homo sapiens (Human).